The primary structure comprises 52 residues: DNA import protein CedA2 (52 aa).

A run of 2 helical transmembrane segments spans residues 1–21 and 27–47; these read MKSY…VYIY and ILVS…IIFE.

In terms of assembly, forms a complex composed of CedA, CedA1 and CedA2.

Its subcellular location is the cell membrane. Its function is as follows. Part of the Ced system, which is involved in DNA import. The polypeptide is DNA import protein CedA2 (Sulfolobus acidocaldarius (strain ATCC 33909 / DSM 639 / JCM 8929 / NBRC 15157 / NCIMB 11770)).